A 58-amino-acid polypeptide reads, in one-letter code: uncharacterized protein (58 aa).

Residues 3 to 52 adopt a coiled-coil conformation; it reads KVILEHLQRIEKQLEILNSKIENFLGFEELSEEELKELDEIEAKMEKGEK.

This is an uncharacterized protein from Archaeoglobus fulgidus (strain ATCC 49558 / DSM 4304 / JCM 9628 / NBRC 100126 / VC-16).